The following is a 485-amino-acid chain: Cysteine protease atg4da (485 aa).

The segment at 22–46 (ASASSKRHLGHGAVPDGIREGSGEP) is disordered. Residue Cys-131 is the Nucleophile of the active site. Active-site residues include Asp-368 and His-370.

It belongs to the peptidase C54 family.

It localises to the cytoplasm. The enzyme catalyses [protein]-C-terminal L-amino acid-glycyl-phosphatidylethanolamide + H2O = [protein]-C-terminal L-amino acid-glycine + a 1,2-diacyl-sn-glycero-3-phosphoethanolamine. It catalyses the reaction [protein]-C-terminal L-amino acid-glycyl-phosphatidylserine + H2O = [protein]-C-terminal L-amino acid-glycine + a 1,2-diacyl-sn-glycero-3-phospho-L-serine. Cysteine protease that plays a key role in autophagy by mediating both proteolytic activation and delipidation of ATG8 family proteins. The protease activity is required for proteolytic activation of ATG8 family proteins to reveal a C-terminal glycine. Exposure of the glycine at the C-terminus is essential for ATG8 proteins conjugation to phosphatidylethanolamine (PE) and insertion to membranes, which is necessary for autophagy. In addition to the protease activity, also mediates delipidation of ATG8 family proteins. Catalyzes delipidation of PE-conjugated forms of ATG8 proteins during macroautophagy. Also involved in non-canonical autophagy, a parallel pathway involving conjugation of ATG8 proteins to single membranes at endolysosomal compartments, by catalyzing delipidation of ATG8 proteins conjugated to phosphatidylserine (PS). ATG4D plays a role in the autophagy-mediated neuronal homeostasis in the central nervous system. The polypeptide is Cysteine protease atg4da (Danio rerio (Zebrafish)).